We begin with the raw amino-acid sequence, 71 residues long: Large ribosomal subunit protein bL31 (71 aa).

Positions 16, 18, 37, and 40 each coordinate Zn(2+).

It belongs to the bacterial ribosomal protein bL31 family. Type A subfamily. Part of the 50S ribosomal subunit. Requires Zn(2+) as cofactor.

Functionally, binds the 23S rRNA. This chain is Large ribosomal subunit protein bL31, found in Pseudomonas putida (strain W619).